The sequence spans 290 residues: S-adenosylmethionine decarboxylase proenzyme (290 aa).

Ser-138 (schiff-base intermediate with substrate; via pyruvic acid) is an active-site residue. Ser-138 carries the post-translational modification Pyruvic acid (Ser); by autocatalysis. His-143 (proton acceptor; for processing activity) is an active-site residue. Cys-166 (proton donor; for catalytic activity) is an active-site residue.

The protein belongs to the prokaryotic AdoMetDC family. Type 2 subfamily. Heterooctamer of four alpha and four beta chains arranged as a tetramer of alpha/beta heterodimers. Pyruvate serves as cofactor. Post-translationally, is synthesized initially as an inactive proenzyme. Formation of the active enzyme involves a self-maturation process in which the active site pyruvoyl group is generated from an internal serine residue via an autocatalytic post-translational modification. Two non-identical subunits are generated from the proenzyme in this reaction, and the pyruvate is formed at the N-terminus of the alpha chain, which is derived from the carboxyl end of the proenzyme. The post-translation cleavage follows an unusual pathway, termed non-hydrolytic serinolysis, in which the side chain hydroxyl group of the serine supplies its oxygen atom to form the C-terminus of the beta chain, while the remainder of the serine residue undergoes an oxidative deamination to produce ammonia and the pyruvoyl group blocking the N-terminus of the alpha chain.

It catalyses the reaction S-adenosyl-L-methionine + H(+) = S-adenosyl 3-(methylsulfanyl)propylamine + CO2. It functions in the pathway amine and polyamine biosynthesis; S-adenosylmethioninamine biosynthesis; S-adenosylmethioninamine from S-adenosyl-L-methionine: step 1/1. Its function is as follows. Catalyzes the decarboxylation of S-adenosylmethionine to S-adenosylmethioninamine (dcAdoMet), the propylamine donor required for the synthesis of the polyamines spermine and spermidine from the diamine putrescine. In Heliobacterium modesticaldum (strain ATCC 51547 / Ice1), this protein is S-adenosylmethionine decarboxylase proenzyme.